The sequence spans 494 residues: Ketol-acid reductoisomerase (NADP(+)) (494 aa).

A KARI N-terminal Rossmann domain is found at 14–208 (LDQLGRCRFM…GGHRAGCLES (195 aa)). Residues 45-48 (CGAQ), R68, R76, S78, and 108-110 (DKQ) each bind NADP(+). The active site involves H132. Residue G158 participates in NADP(+) binding. KARI C-terminal knotted domains are found at residues 209-344 (SFVA…NYPE) and 345-487 (TDVE…MTDM). Residues D217, E221, E389, and E393 each coordinate Mg(2+). A substrate-binding site is contributed by S414.

It belongs to the ketol-acid reductoisomerase family. Mg(2+) serves as cofactor.

The enzyme catalyses (2R)-2,3-dihydroxy-3-methylbutanoate + NADP(+) = (2S)-2-acetolactate + NADPH + H(+). The catalysed reaction is (2R,3R)-2,3-dihydroxy-3-methylpentanoate + NADP(+) = (S)-2-ethyl-2-hydroxy-3-oxobutanoate + NADPH + H(+). It participates in amino-acid biosynthesis; L-isoleucine biosynthesis; L-isoleucine from 2-oxobutanoate: step 2/4. Its pathway is amino-acid biosynthesis; L-valine biosynthesis; L-valine from pyruvate: step 2/4. In terms of biological role, involved in the biosynthesis of branched-chain amino acids (BCAA). Catalyzes an alkyl-migration followed by a ketol-acid reduction of (S)-2-acetolactate (S2AL) to yield (R)-2,3-dihydroxy-isovalerate. In the isomerase reaction, S2AL is rearranged via a Mg-dependent methyl migration to produce 3-hydroxy-3-methyl-2-ketobutyrate (HMKB). In the reductase reaction, this 2-ketoacid undergoes a metal-dependent reduction by NADPH to yield (R)-2,3-dihydroxy-isovalerate. The polypeptide is Ketol-acid reductoisomerase (NADP(+)) (Vibrio parahaemolyticus serotype O3:K6 (strain RIMD 2210633)).